Reading from the N-terminus, the 985-residue chain is Alanine--tRNA ligase, mitochondrial (985 aa).

Residues 1-23 (MAASVAAAARRLRRAIRRSPAWR) constitute a mitochondrion transit peptide. ATP is bound by residues Arg110, His128, Trp210, and 240-242 (LWN). Positions 242 and 265 each coordinate L-alanine. Gly269 is a binding site for ATP. 4 residues coordinate Zn(2+): His632, His636, Cys749, and His753.

It belongs to the class-II aminoacyl-tRNA synthetase family. In terms of assembly, monomer. Zn(2+) is required as a cofactor.

It localises to the mitochondrion. The enzyme catalyses tRNA(Ala) + L-alanine + ATP = L-alanyl-tRNA(Ala) + AMP + diphosphate. It carries out the reaction (S)-lactate + ATP + H(+) = (S)-lactoyl-AMP + diphosphate. The catalysed reaction is (S)-lactoyl-AMP + L-lysyl-[protein] = N(6)-[(S)-lactoyl]-L-lysyl-[protein] + AMP + 2 H(+). Catalyzes the attachment of alanine to tRNA(Ala) in a two-step reaction: alanine is first activated by ATP to form Ala-AMP and then transferred to the acceptor end of tRNA(Ala). Also edits incorrectly charged tRNA(Ala) via its editing domain. In presence of high levels of lactate, also acts as a protein lactyltransferase that mediates lactylation of lysine residues in target proteins, such as CGAS. Acts as an inhibitor of cGAS/STING signaling by catalyzing lactylation of CGAS, preventing the formation of liquid-like droplets in which CGAS is activated. This chain is Alanine--tRNA ligase, mitochondrial, found in Homo sapiens (Human).